A 283-amino-acid polypeptide reads, in one-letter code: uncharacterized protein (283 aa).

Asp-121 is a catalytic residue.

Belongs to the pseudouridine synthase RluA family.

It catalyses the reaction a uridine in RNA = a pseudouridine in RNA. This is an uncharacterized protein from Bacillus subtilis (strain 168).